The primary structure comprises 432 residues: Serine hydroxymethyltransferase (432 aa).

Residues leucine 131 and 135-137 contribute to the (6S)-5,6,7,8-tetrahydrofolate site; that span reads GHL. The residue at position 240 (lysine 240) is an N6-(pyridoxal phosphate)lysine.

This sequence belongs to the SHMT family. As to quaternary structure, homodimer. It depends on pyridoxal 5'-phosphate as a cofactor.

The protein resides in the cytoplasm. The enzyme catalyses (6R)-5,10-methylene-5,6,7,8-tetrahydrofolate + glycine + H2O = (6S)-5,6,7,8-tetrahydrofolate + L-serine. It participates in one-carbon metabolism; tetrahydrofolate interconversion. The protein operates within amino-acid biosynthesis; glycine biosynthesis; glycine from L-serine: step 1/1. In terms of biological role, catalyzes the reversible interconversion of serine and glycine with tetrahydrofolate (THF) serving as the one-carbon carrier. This reaction serves as the major source of one-carbon groups required for the biosynthesis of purines, thymidylate, methionine, and other important biomolecules. Also exhibits THF-independent aldolase activity toward beta-hydroxyamino acids, producing glycine and aldehydes, via a retro-aldol mechanism. The sequence is that of Serine hydroxymethyltransferase from Acidiphilium cryptum (strain JF-5).